We begin with the raw amino-acid sequence, 414 residues long: Gamma-glutamyl phosphate reductase (414 aa).

This sequence belongs to the gamma-glutamyl phosphate reductase family.

It localises to the cytoplasm. It catalyses the reaction L-glutamate 5-semialdehyde + phosphate + NADP(+) = L-glutamyl 5-phosphate + NADPH + H(+). Its pathway is amino-acid biosynthesis; L-proline biosynthesis; L-glutamate 5-semialdehyde from L-glutamate: step 2/2. Its function is as follows. Catalyzes the NADPH-dependent reduction of L-glutamate 5-phosphate into L-glutamate 5-semialdehyde and phosphate. The product spontaneously undergoes cyclization to form 1-pyrroline-5-carboxylate. This chain is Gamma-glutamyl phosphate reductase, found in Geobacillus thermodenitrificans (strain NG80-2).